Here is a 94-residue protein sequence, read N- to C-terminus: Small ribosomal subunit protein uS19 (94 aa).

The protein belongs to the universal ribosomal protein uS19 family.

Its function is as follows. Protein S19 forms a complex with S13 that binds strongly to the 16S ribosomal RNA. The chain is Small ribosomal subunit protein uS19 from Acetivibrio thermocellus (strain ATCC 27405 / DSM 1237 / JCM 9322 / NBRC 103400 / NCIMB 10682 / NRRL B-4536 / VPI 7372) (Clostridium thermocellum).